The sequence spans 421 residues: Tyrosine--tRNA ligase (421 aa).

L-tyrosine is bound at residue tyrosine 35. The short motif at 40 to 49 (PTGPSLHAGH) is the 'HIGH' region element. Positions 169 and 173 each coordinate L-tyrosine. Positions 229 to 233 (KFGKS) match the 'KMSKS' region motif. ATP is bound at residue lysine 232. The region spanning 354 to 420 (RTIVDLLIAS…GKKNFAGVKI (67 aa)) is the S4 RNA-binding domain.

Belongs to the class-I aminoacyl-tRNA synthetase family. TyrS type 1 subfamily. In terms of assembly, homodimer.

Its subcellular location is the cytoplasm. It carries out the reaction tRNA(Tyr) + L-tyrosine + ATP = L-tyrosyl-tRNA(Tyr) + AMP + diphosphate + H(+). In terms of biological role, catalyzes the attachment of tyrosine to tRNA(Tyr) in a two-step reaction: tyrosine is first activated by ATP to form Tyr-AMP and then transferred to the acceptor end of tRNA(Tyr). The polypeptide is Tyrosine--tRNA ligase (Corynebacterium efficiens (strain DSM 44549 / YS-314 / AJ 12310 / JCM 11189 / NBRC 100395)).